The chain runs to 224 residues: Large ribosomal subunit protein uL11c (224 aa).

The N-terminal 66 residues, 1 to 66, are a transit peptide targeting the chloroplast; that stretch reads MAQPLVAAPS…SHRRLSIVAM (66 aa). 2 positions are modified to N6,N6,N6-trimethyllysine: lysine 75 and lysine 111.

In terms of assembly, component of the chloroplast large ribosomal subunit (LSU). Mature 70S chloroplast ribosomes of higher plants consist of a small (30S) and a large (50S) subunit. The 30S small subunit contains 1 molecule of ribosomal RNA (16S rRNA) and 24 different proteins. The 50S large subunit contains 3 rRNA molecules (23S, 5S and 4.5S rRNA) and 33 different proteins.

Its subcellular location is the plastid. It is found in the chloroplast. Functionally, component of the chloroplast ribosome (chloro-ribosome), a dedicated translation machinery responsible for the synthesis of chloroplast genome-encoded proteins, including proteins of the transcription and translation machinery and components of the photosynthetic apparatus. The chain is Large ribosomal subunit protein uL11c (rpl11) from Spinacia oleracea (Spinach).